A 152-amino-acid polypeptide reads, in one-letter code: Transcriptional repressor NrdR (152 aa).

A zinc finger lies at Cys3–Cys34. The ATP-cone domain maps to Leu49–Ala139.

It belongs to the NrdR family. Requires Zn(2+) as cofactor.

Functionally, negatively regulates transcription of bacterial ribonucleotide reductase nrd genes and operons by binding to NrdR-boxes. This chain is Transcriptional repressor NrdR, found in Limosilactobacillus fermentum (strain NBRC 3956 / LMG 18251) (Lactobacillus fermentum).